Reading from the N-terminus, the 132-residue chain is Phosphoribosyl-AMP cyclohydrolase (132 aa).

Position 79 (D79) interacts with Mg(2+). C80 is a binding site for Zn(2+). Mg(2+)-binding residues include D81 and D83. Residues C100 and C107 each coordinate Zn(2+).

The protein belongs to the PRA-CH family. In terms of assembly, homodimer. The cofactor is Mg(2+). It depends on Zn(2+) as a cofactor.

The protein resides in the cytoplasm. The catalysed reaction is 1-(5-phospho-beta-D-ribosyl)-5'-AMP + H2O = 1-(5-phospho-beta-D-ribosyl)-5-[(5-phospho-beta-D-ribosylamino)methylideneamino]imidazole-4-carboxamide. It functions in the pathway amino-acid biosynthesis; L-histidine biosynthesis; L-histidine from 5-phospho-alpha-D-ribose 1-diphosphate: step 3/9. Functionally, catalyzes the hydrolysis of the adenine ring of phosphoribosyl-AMP. The chain is Phosphoribosyl-AMP cyclohydrolase from Acidovorax sp. (strain JS42).